Consider the following 516-residue polypeptide: GTPase Obg (516 aa).

Residues 4–161 (PTFVDRVTLH…LEIVLELKVV (158 aa)) enclose the Obg domain. In terms of domain architecture, OBG-type G spans 162 to 332 (ADIGLVGFPS…LTFAMAGIVE (171 aa)). GTP is bound by residues 168-175 (GFPSAGKS), 193-197 (FTTLV), 214-217 (DVPG), 284-287 (NKVD), and 313-315 (SAA). Residues S175 and T195 each coordinate Mg(2+). Positions 351-432 (PSVDGSDAFT…ENAVVFDFKP (82 aa)) constitute an OCT domain. Basic and acidic residues predominate over residues 466–491 (AMADRAEGETRADVARRLDRPAREDG). Residues 466-516 (AMADRAEGETRADVARRLDRPAREDGGAYGPQSYEIGGRDDPDWAEEDLGE) form a disordered region.

This sequence belongs to the TRAFAC class OBG-HflX-like GTPase superfamily. OBG GTPase family. As to quaternary structure, monomer. Requires Mg(2+) as cofactor.

Its subcellular location is the cytoplasm. Functionally, an essential GTPase which binds GTP, GDP and possibly (p)ppGpp with moderate affinity, with high nucleotide exchange rates and a fairly low GTP hydrolysis rate. Plays a role in control of the cell cycle, stress response, ribosome biogenesis and in those bacteria that undergo differentiation, in morphogenesis control. The protein is GTPase Obg of Nocardioides sp. (strain ATCC BAA-499 / JS614).